A 285-amino-acid chain; its full sequence is Bifunctional protein FolD 2 (285 aa).

Residues 164–166 (GRS), S189, and V230 each bind NADP(+).

It belongs to the tetrahydrofolate dehydrogenase/cyclohydrolase family. Homodimer.

It carries out the reaction (6R)-5,10-methylene-5,6,7,8-tetrahydrofolate + NADP(+) = (6R)-5,10-methenyltetrahydrofolate + NADPH. The enzyme catalyses (6R)-5,10-methenyltetrahydrofolate + H2O = (6R)-10-formyltetrahydrofolate + H(+). Its pathway is one-carbon metabolism; tetrahydrofolate interconversion. Catalyzes the oxidation of 5,10-methylenetetrahydrofolate to 5,10-methenyltetrahydrofolate and then the hydrolysis of 5,10-methenyltetrahydrofolate to 10-formyltetrahydrofolate. This chain is Bifunctional protein FolD 2, found in Geobacter metallireducens (strain ATCC 53774 / DSM 7210 / GS-15).